Here is a 225-residue protein sequence, read N- to C-terminus: 3-dehydroquinate dehydratase (225 aa).

3-dehydroquinate-binding positions include 30 to 32 (EWR) and arginine 62. The Proton donor/acceptor role is filled by histidine 118. Catalysis depends on lysine 143, which acts as the Schiff-base intermediate with substrate. 3-dehydroquinate-binding residues include arginine 186, serine 205, and glutamine 209.

This sequence belongs to the type-I 3-dehydroquinase family. Homodimer.

The catalysed reaction is 3-dehydroquinate = 3-dehydroshikimate + H2O. It participates in metabolic intermediate biosynthesis; chorismate biosynthesis; chorismate from D-erythrose 4-phosphate and phosphoenolpyruvate: step 3/7. Functionally, involved in the third step of the chorismate pathway, which leads to the biosynthesis of aromatic amino acids. Catalyzes the cis-dehydration of 3-dehydroquinate (DHQ) and introduces the first double bond of the aromatic ring to yield 3-dehydroshikimate. The sequence is that of 3-dehydroquinate dehydratase from Streptococcus mutans serotype c (strain ATCC 700610 / UA159).